Consider the following 960-residue polypeptide: Endoplasmic reticulum aminopeptidase 2 (960 aa).

Over 1–20 (MFHSSAMVNSHRKPMFNIHR) the chain is Cytoplasmic. A helical; Signal-anchor for type II membrane protein transmembrane segment spans residues 21-40 (GFYCLTAILPQICICSQFSV). The Lumenal segment spans residues 41-960 (PSSYHFTEDP…TLRTWLMVNT (920 aa)). N-linked (GlcNAc...) asparagine glycosylation is found at Asn85 and Asn119. Glu200 is a binding site for substrate. The N-linked (GlcNAc...) asparagine glycan is linked to Asn219. 334–338 (GAMEN) contacts substrate. His370 is a Zn(2+) binding site. The active-site Proton acceptor is the Glu371. Zn(2+)-binding residues include His374 and Glu393. Asn405 is a glycosylation site (N-linked (GlcNAc...) asparagine). A disulfide bridge links Cys421 with Cys460. The N-linked (GlcNAc...) asparagine glycan is linked to Asn650. Cys759 and Cys766 are oxidised to a cystine.

The protein belongs to the peptidase M1 family. As to quaternary structure, heterodimer with ERAP1. Requires Zn(2+) as cofactor. Post-translationally, N-glycosylated. As to expression, ubiquitously expressed. Highly expressed in spleen and leukocytes.

The protein resides in the endoplasmic reticulum membrane. Aminopeptidase that plays a central role in peptide trimming, a step required for the generation of most HLA class I-binding peptides. Peptide trimming is essential to customize longer precursor peptides to fit them to the correct length required for presentation on MHC class I molecules. Preferentially hydrolyzes the basic residues Arg and Lys. The chain is Endoplasmic reticulum aminopeptidase 2 (ERAP2) from Homo sapiens (Human).